Here is a 567-residue protein sequence, read N- to C-terminus: Glucose-6-phosphate isomerase, cytosolic (567 aa).

Glu360 functions as the Proton donor in the catalytic mechanism. Active-site residues include His391 and Lys516.

Belongs to the GPI family. As to quaternary structure, homodimer.

It localises to the cytoplasm. The enzyme catalyses alpha-D-glucose 6-phosphate = beta-D-fructose 6-phosphate. The protein operates within carbohydrate degradation; glycolysis; D-glyceraldehyde 3-phosphate and glycerone phosphate from D-glucose: step 2/4. This is Glucose-6-phosphate isomerase, cytosolic (PHI1) from Zea mays (Maize).